Here is a 1149-residue protein sequence, read N- to C-terminus: cGMP-specific 3',5'-cyclic phosphodiesterase (1149 aa).

2 stretches are compositionally biased toward low complexity: residues M1 to S19 and A31 to S47. Positions M1–D175 are disordered. Positions K48–I59 are enriched in polar residues. Residues S60–G85 are compositionally biased toward low complexity. Over residues Q96–S108 the composition is skewed to polar residues. The segment covering S132–Q158 has biased composition (low complexity). GAF domains follow at residues D278–I430 and N462–I643. Residues S673 to V996 enclose the PDEase domain. The Proton donor role is filled by H749. Positions 753, 789, 790, and 900 each coordinate a divalent metal cation. Disordered stretches follow at residues Q1037–L1066 and S1096–L1149. Composition is skewed to basic and acidic residues over residues G1042–R1053 and S1096–S1106. Residues A1115–M1135 show a composition bias toward low complexity. Basic residues predominate over residues S1139 to L1149. Cysteine methyl ester is present on C1146. Residue C1146 is the site of S-farnesyl cysteine attachment. A propeptide spans A1147–L1149 (removed in mature form).

It belongs to the cyclic nucleotide phosphodiesterase family. In terms of assembly, interacts with PrBP. It depends on a divalent metal cation as a cofactor.

It is found in the cell membrane. The enzyme catalyses 3',5'-cyclic GMP + H2O = GMP + H(+). Its function is as follows. Has a role regulating cGMP transport in Malpighian tubule principal cells. In Drosophila yakuba (Fruit fly), this protein is cGMP-specific 3',5'-cyclic phosphodiesterase.